Reading from the N-terminus, the 317-residue chain is Epidermal growth factor-like protein (317 aa).

The first 23 residues, 1-23, serve as a signal peptide directing secretion; that stretch reads MDFKIFLFLTAIFMIVGVTVSTA. The tract at residues 24–33 is may be required for E.coli agglutination activity; it reads TTNPTAPRAY. EGF-like domains are found at residues 93 to 128, 130 to 161, 163 to 195, 208 to 243, 245 to 280, and 282 to 315; these read HCTP…GKCI, VCPG…RYCT, GCTR…GTCQ, ACEP…KVCA, KCSQ…NRCI, and YCAA…NVCV. Intrachain disulfides connect cysteine 98/cysteine 107, cysteine 102/cysteine 113, cysteine 115/cysteine 127, cysteine 131/cysteine 140, cysteine 135/cysteine 145, cysteine 147/cysteine 160, cysteine 164/cysteine 174, cysteine 168/cysteine 180, cysteine 182/cysteine 194, cysteine 213/cysteine 222, cysteine 217/cysteine 228, cysteine 230/cysteine 242, cysteine 246/cysteine 255, cysteine 250/cysteine 261, cysteine 263/cysteine 279, cysteine 283/cysteine 292, cysteine 287/cysteine 298, and cysteine 300/cysteine 314.

Its subcellular location is the secreted. Binds to lipopolysaccharides (LPS) present on the cell walls of Gram-negative bacteria, behaving as a pattern recognition receptor (PRR). Induces bacterial aggregation and enhances their subsequent clearance by the innate immune response. Binds to the inner core oligosaccharides region of rough-type bacterial LPS. Displays activity against the Gram-negative bacterium E.coli. Does not display any activity against the Gram-positive bacterium S.aureus or the fungi C.albicans. This is Epidermal growth factor-like protein from Holotrichia diomphalia (Korean black chafer).